Reading from the N-terminus, the 130-residue chain is UPF0146 protein AF_0739.1 (130 aa).

The protein belongs to the UPF0146 family.

This chain is UPF0146 protein AF_0739.1, found in Archaeoglobus fulgidus (strain ATCC 49558 / DSM 4304 / JCM 9628 / NBRC 100126 / VC-16).